Here is a 539-residue protein sequence, read N- to C-terminus: O-phosphoserine--tRNA(Cys) ligase (539 aa).

Substrate contacts are provided by residues histidine 188–threonine 190, serine 233–serine 235, tyrosine 275–tyrosine 276, and asparagine 327.

Belongs to the class-II aminoacyl-tRNA synthetase family. O-phosphoseryl-tRNA(Cys) synthetase subfamily. As to quaternary structure, homotetramer. Interacts with SepCysS.

It catalyses the reaction tRNA(Cys) + O-phospho-L-serine + ATP = O-phospho-L-seryl-tRNA(Cys) + AMP + diphosphate. In terms of biological role, catalyzes the attachment of O-phosphoserine (Sep) to tRNA(Cys). This Methanosarcina mazei (strain ATCC BAA-159 / DSM 3647 / Goe1 / Go1 / JCM 11833 / OCM 88) (Methanosarcina frisia) protein is O-phosphoserine--tRNA(Cys) ligase.